We begin with the raw amino-acid sequence, 470 residues long: 6-phospho-beta-galactosidase (470 aa).

Residues Q19, H116, N159, E160, and N297 each contribute to the D-galactose 6-phosphate site. E160 serves as the catalytic Proton donor. E375 (nucleophile) is an active-site residue. The D-galactose 6-phosphate site is built by S430, W431, K437, and Y439.

The protein belongs to the glycosyl hydrolase 1 family.

It catalyses the reaction a 6-phospho-beta-D-galactoside + H2O = D-galactose 6-phosphate + an alcohol. It participates in carbohydrate metabolism; lactose degradation; D-galactose 6-phosphate and beta-D-glucose from lactose 6-phosphate: step 1/1. In Staphylococcus epidermidis (strain ATCC 35984 / DSM 28319 / BCRC 17069 / CCUG 31568 / BM 3577 / RP62A), this protein is 6-phospho-beta-galactosidase.